Consider the following 503-residue polypeptide: Maturase K (503 aa).

This sequence belongs to the intron maturase 2 family. MatK subfamily.

The protein localises to the plastid. It localises to the chloroplast. In terms of biological role, usually encoded in the trnK tRNA gene intron. Probably assists in splicing its own and other chloroplast group II introns. This chain is Maturase K, found in Backhousia subargentea (Giant ironwood).